We begin with the raw amino-acid sequence, 971 residues long: Putative helicase 184R (971 aa).

The segment at 506–528 (GYEPSDSGFGFDDDDSASTSGGK) is disordered. The SF3 helicase domain occupies 624 to 807 (PKVIKMLNFF…FKDSIDDISL (184 aa)). ATP is bound at residue 668–675 (GEGDNGKS).

This sequence belongs to the IIV-6 184R family.

In Acheta domesticus (House cricket), this protein is Putative helicase 184R.